A 232-amino-acid polypeptide reads, in one-letter code: Ribonuclease 3 (232 aa).

One can recognise an RNase III domain in the interval 10–135 (ALKIYEATGY…LIGAMYMDGG (126 aa)). Residue glutamate 48 coordinates Mg(2+). Aspartate 52 is an active-site residue. Asparagine 121 and glutamate 124 together coordinate Mg(2+). Glutamate 124 is an active-site residue. The DRBM domain maps to 161 to 230 (DPKTALQEWV…AKLMLKKITE (70 aa)).

Belongs to the ribonuclease III family. In terms of assembly, homodimer. It depends on Mg(2+) as a cofactor.

The protein resides in the cytoplasm. It carries out the reaction Endonucleolytic cleavage to 5'-phosphomonoester.. Functionally, digests double-stranded RNA. Involved in the processing of primary rRNA transcript to yield the immediate precursors to the large and small rRNAs (23S and 16S). Processes some mRNAs, and tRNAs when they are encoded in the rRNA operon. Processes pre-crRNA and tracrRNA of type II CRISPR loci if present in the organism. This chain is Ribonuclease 3, found in Anaplasma marginale (strain St. Maries).